Consider the following 309-residue polypeptide: Elongation factor Ts (309 aa).

The interval 82 to 85 is involved in Mg(2+) ion dislocation from EF-Tu; the sequence is TDFV.

It belongs to the EF-Ts family.

It is found in the cytoplasm. Associates with the EF-Tu.GDP complex and induces the exchange of GDP to GTP. It remains bound to the aminoacyl-tRNA.EF-Tu.GTP complex up to the GTP hydrolysis stage on the ribosome. The polypeptide is Elongation factor Ts (Rickettsia felis (strain ATCC VR-1525 / URRWXCal2) (Rickettsia azadi)).